A 464-amino-acid polypeptide reads, in one-letter code: Glutamate--tRNA ligase (464 aa).

The 'HIGH' region signature appears at 9–19; it reads PSPTGYLHIGG. The 'KMSKS' region signature appears at 242-246; sequence KISKR. Lys-245 lines the ATP pocket.

The protein belongs to the class-I aminoacyl-tRNA synthetase family. Glutamate--tRNA ligase type 1 subfamily. Monomer.

It is found in the cytoplasm. It carries out the reaction tRNA(Glu) + L-glutamate + ATP = L-glutamyl-tRNA(Glu) + AMP + diphosphate. In terms of biological role, catalyzes the attachment of glutamate to tRNA(Glu) in a two-step reaction: glutamate is first activated by ATP to form Glu-AMP and then transferred to the acceptor end of tRNA(Glu). This chain is Glutamate--tRNA ligase, found in Neisseria gonorrhoeae (strain ATCC 700825 / FA 1090).